The chain runs to 241 residues: Sugar fermentation stimulation protein homolog (241 aa).

Belongs to the SfsA family.

The chain is Sugar fermentation stimulation protein homolog from Hahella chejuensis (strain KCTC 2396).